An 89-amino-acid chain; its full sequence is Signal recognition particle 19 kDa protein (89 aa).

This sequence belongs to the SRP19 family. In terms of assembly, part of the signal recognition particle protein translocation system, which is composed of SRP and FtsY. Archaeal SRP consists of a 7S RNA molecule of 300 nucleotides and two protein subunits: SRP54 and SRP19.

It localises to the cytoplasm. Functionally, involved in targeting and insertion of nascent membrane proteins into the cytoplasmic membrane. Binds directly to 7S RNA and mediates binding of the 54 kDa subunit of the SRP. The sequence is that of Signal recognition particle 19 kDa protein from Methanococcus maripaludis (strain DSM 14266 / JCM 13030 / NBRC 101832 / S2 / LL).